A 77-amino-acid chain; its full sequence is Small ribosomal subunit protein bS18 (77 aa).

It belongs to the bacterial ribosomal protein bS18 family. Part of the 30S ribosomal subunit. Forms a tight heterodimer with protein bS6.

Functionally, binds as a heterodimer with protein bS6 to the central domain of the 16S rRNA, where it helps stabilize the platform of the 30S subunit. The protein is Small ribosomal subunit protein bS18 of Bacillus cereus (strain ATCC 10987 / NRS 248).